The primary structure comprises 757 residues: Lysyl oxidase homolog 4 (757 aa).

An N-terminal signal peptide occupies residues 1–25 (MMWPQPPTFSLFLLLLLSQAPSSRP). 4 consecutive SRCR domains span residues 33-134 (LRLV…VVCH), 160-288 (VRLK…VSCV), 312-412 (VRLR…VRCN), and 422-530 (VRLA…VACM). 17 cysteine pairs are disulfide-bonded: Cys-59/Cys-123, Cys-72/Cys-133, Cys-103/Cys-113, Cys-192/Cys-277, Cys-205/Cys-287, Cys-252/Cys-262, Cys-337/Cys-401, Cys-350/Cys-411, Cys-381/Cys-391, Cys-451/Cys-516, Cys-464/Cys-529, Cys-498/Cys-508, Cys-559/Cys-565, Cys-611/Cys-659, Cys-643/Cys-649, Cys-671/Cys-681, and Cys-718/Cys-732. Asn-199 is a glycosylation site (N-linked (GlcNAc...) asparagine). Residues 534-737 (PDLVMNAQLV…WLHNCHTGDS (204 aa)) are lysyl-oxidase like. The Cu cation site is built by His-612, His-614, and His-616. Asn-630 carries an N-linked (GlcNAc...) asparagine glycan. The segment at residues 639–675 (KASFCLEDTNCPSGVQRRYACANFGEQGVAVGCWDTY) is a cross-link (lysine tyrosylquinone (Lys-Tyr)). The residue at position 675 (Tyr-675) is a 2',4',5'-topaquinone.

This sequence belongs to the lysyl oxidase family. Requires Cu cation as cofactor. It depends on lysine tyrosylquinone residue as a cofactor. Post-translationally, the lysine tyrosylquinone cross-link (LTQ) is generated by condensation of the epsilon-amino group of a lysine with a topaquinone produced by oxidation of tyrosine. May be proteolytically cleaved by BMP1.

Its subcellular location is the secreted. The protein resides in the extracellular space. It carries out the reaction L-lysyl-[protein] + O2 + H2O = (S)-2-amino-6-oxohexanoyl-[protein] + H2O2 + NH4(+). Catalyzes the oxidative deamination of lysine and hydroxylysine residues in collagen and elastin, resulting in the formation of covalent cross-linkages, and the stabilization of collagen and elastin fibers. In Mus musculus (Mouse), this protein is Lysyl oxidase homolog 4 (Loxl4).